The sequence spans 1904 residues: Voltage-dependent calcium channel type A subunit alpha-1 (1904 aa).

The interval 1 to 45 (MLGGVGGRHMSTRRRGSSPLVRGGAGLTGYAGPGASGNSNDVAAI) is disordered. Residues 23–35 (GGAGLTGYAGPGA) show a composition bias toward gly residues. Residues 30-168 (YAGPGASGNS…KHTRFIIEWP (139 aa)) lie on the Cytoplasmic side of the membrane. One copy of the I repeat lies at 155-447 (NCIRKHTRFI…LVLGVLSGEF (293 aa)). Residues 169–187 (PFEYAVLLTIIANCVVLAL) traverse the membrane as a helical segment. Residues 188–205 (EEHLPKQDKTILAQKLEA) are Extracellular-facing. Residues 206 to 225 (TEIYFLGIFCVEASLKILAL) traverse the membrane as a helical segment. Residues 226–237 (GFVLHRGSYLRN) are Cytoplasmic-facing. Residues 238-259 (IWNIMDFFVVVTGFITAFSQGI) traverse the membrane as a helical segment. Residues 260–264 (ELDMD) lie on the Extracellular side of the membrane. Residues 265–283 (LRTLRAIRVLRPLKLVSGI) form a helical membrane-spanning segment. Over 284 to 302 (PSLQVVLKSIIKAMAPLLQ) the chain is Cytoplasmic. Residues 303-322 (IGLLVLFAIVIFAIIGLEFY) traverse the membrane as a helical segment. Topologically, residues 323-419 (SGTLHKTCYS…WTNDALGSTY (97 aa)) are extracellular. 2 N-linked (GlcNAc...) asparagine glycosylation sites follow: asparagine 353 and asparagine 367. A helical transmembrane segment spans residues 420-444 (NWIYFIPLIVLGSFFMLNLVLGVLS). Over 445–568 (GEFAKEREKV…YWIRKSVKSQ (124 aa)) the chain is Cytoplasmic. A disordered region spans residues 513–543 (KKLGKSKSTDTEEEEGDDDQDDGELSSSTKE). Residues 523–536 (TEEEEGDDDQDDGE) are compositionally biased toward acidic residues. The II repeat unit spans residues 554-797 (EKRFRYWIRK…VFLAIAVDNL (244 aa)). Residues 569-587 (KFYWFVIVLVFFNTVCVAV) form a helical membrane-spanning segment. At 588-602 (EHYGQPQWLTDFLYF) the chain is on the extracellular side. A helical membrane pass occupies residues 603–622 (AEFVFLALFMLEMFIKVYAL). Residues 623–630 (GPRTYFDS) are Cytoplasmic-facing. Residues 631–649 (SFNRFDCVVISGSIFEVIW) form a helical membrane-spanning segment. Topologically, residues 650 to 658 (SEVKSGSFG) are extracellular. Residues 659–677 (LSVLRALRLLRIFKVTKYW) form a helical membrane-spanning segment. Topologically, residues 678–696 (KSLRNLVISLLSSMRSIIS) are cytoplasmic. The helical transmembrane segment at 697-716 (LLFLLFLFILIFALLGMQLF) threads the bilayer. Residues 717-769 (GGQFNFDSGTPPTNFNTFPIALLTVFQILTGEDWNEVMYQGIESQGGHKKGMI) are Extracellular-facing. Residues 770 to 794 (YSLYFIVLVLFGNYTLLNVFLAIAV) form a helical membrane-spanning segment. The Cytoplasmic segment spans residues 795–895 (DNLANAQELS…VRRAAHWVVN (101 aa)). A disordered region spans residues 827-869 (QSLQNPKDGGAPKVEICPPNGKGGKQSSEEEKKQDEDDDTGPK). The III repeat unit spans residues 890–1177 (AHWVVNLRYF…IITFQEQGEA (288 aa)). Residues 896-914 (LRYFDFFIMVVISLSSIAL) form a helical membrane-spanning segment. The Extracellular segment spans residues 915-930 (AAEDPVWEDSPRNEVL). A helical transmembrane segment spans residues 931-950 (NYFDYAFTGVFTVEMILKII). Residues 951 to 962 (DLGIILHPGSYL) are Cytoplasmic-facing. Residues 963–981 (REFWNIMDAVVVICAAVSF) form a helical membrane-spanning segment. The Extracellular segment spans residues 982–994 (AFDMTGSSAGQNL). Residue asparagine 993 is glycosylated (N-linked (GlcNAc...) asparagine). Residues 995 to 1013 (STIKSLRVLRVLRPLKTIK) form a helical membrane-spanning segment. The Cytoplasmic portion of the chain corresponds to 1014–1032 (RVPKLKAVFDCVVNSLKNV). The helical transmembrane segment at 1033–1052 (INILIVYILFQFIFAVIAVQ) threads the bilayer. At 1053–1141 (LFNGKFFYCS…EDKGPIQNFR (89 aa)) the chain is on the extracellular side. A helical transmembrane segment spans residues 1142-1166 (IEMSIFYIVYFIVFPFFFVNIFVAL). Topologically, residues 1167 to 1221 (IIITFQEQGEAELQDGEIDKNQKSCIDFTIQARPLERYMPKERNSVKYKIWRIVV) are cytoplasmic. Residues 1214–1470 (YKIWRIVVST…DNFDYLTRDS (257 aa)) form an IV repeat. Residues 1222-1250 (STPFEYFIMGLIVLNTVLLMMKFHRQSDA) traverse the membrane as a helical segment. At 1251 to 1255 (YKNTL) the chain is on the extracellular side. The chain crosses the membrane as a helical span at residues 1256 to 1275 (KYMNMCFTGMFTVECILKIA). Over 1276–1283 (AFGVRNFF) the chain is Cytoplasmic. The chain crosses the membrane as a helical span at residues 1284 to 1302 (KDAWNTFDFITVIGSIVDA). Residues 1303-1309 (LVIEFGE) are Extracellular-facing. A helical membrane pass occupies residues 1310 to 1328 (NFINVGFLRLFRAARLIKL). Over 1329–1347 (LRQGYTIRILLWTFVQSFK) the chain is Cytoplasmic. Residues 1348 to 1367 (ALPYVCLLIAMLFFIYAIIG) traverse the membrane as a helical segment. Residues 1368 to 1431 (MQVFGNIALD…AKAGKQEGGC (64 aa)) lie on the Extracellular side of the membrane. A phenylalkylamine binding region spans residues 1430–1471 (GCGSNIAYAYFVSFIFFCSFLMLNLFVAVIMDNFDYLTRDSS). Residues 1432–1456 (GSNIAYAYFVSFIFFCSFLMLNLFV) traverse the membrane as a helical segment. The Cytoplasmic segment spans residues 1457-1904 (AVIMDNFDYL…HSDSDEDDWC (448 aa)). The region spanning 1476 to 1511 (HHLDEFVRIWAEYDPNATGKIHYTEMYDMLKNMDPP) is the EF-hand domain. Ca(2+) is bound by residues aspartate 1489, asparagine 1491, threonine 1493, lysine 1495, and glutamate 1500. Disordered stretches follow at residues 1652-1694 (THTG…HEGP), 1710-1788 (THHP…HSYP), and 1870-1904 (GGRL…DDWC). Over residues 1670 to 1681 (RSPSLRHSPGRP) the composition is skewed to low complexity. Residues 1682-1691 (GYDHHGHYYH) are compositionally biased toward basic and acidic residues. Over residues 1710 to 1725 (THHPHPSQYNHRHRMR) the composition is skewed to basic residues. The span at 1727-1740 (PWSASTSPARTPSP) shows a compositional bias: low complexity. Residues 1751 to 1762 (GTTSLEQRSRSP) show a composition bias toward polar residues. The span at 1771–1784 (PHTHQHYHRHHPHQ) shows a compositional bias: basic residues.

It belongs to the calcium channel alpha-1 subunit (TC 1.A.1.11) family. CACNA1I subfamily. In terms of assembly, interacts with CATSPER1 and CATSPER2, leading to suppress T-type calcium channel activity.

The protein localises to the membrane. Functionally, voltage-sensitive calcium channels (VSCC) mediate the entry of calcium ions into excitable cells and are also involved in a variety of calcium-dependent processes, including muscle contraction, neurotransmitter release, gene expression, cell motility, cell division and cell death. The polypeptide is Voltage-dependent calcium channel type A subunit alpha-1 (CAC) (Apis mellifera (Honeybee)).